The primary structure comprises 83 residues: Small ribosomal subunit protein bS16 (83 aa).

Belongs to the bacterial ribosomal protein bS16 family.

The protein is Small ribosomal subunit protein bS16 of Pseudomonas aeruginosa (strain UCBPP-PA14).